The primary structure comprises 168 residues: Gremlin-2 (168 aa).

The N-terminal stretch at M1 to T21 is a signal peptide. Residue N40 is glycosylated (N-linked (GlcNAc...) asparagine). Disulfide bonds link C73–C123, C87–C137, C97–C155, and C101–C157. The CTCK domain maps to C73–S163. N-linked (GlcNAc...) asparagine glycosylation occurs at N161.

This sequence belongs to the DAN family. In terms of assembly, homodimer. Interacts with BMP2, BMP4 and BMP7, but has lower affinity for BMP7 than for BMP2 and BMP4. Binds heparin; this impairs the interaction with BMP2. Post-translationally, N-glycosylated. Highly expressed in the ovary, followed by brain, spleen, colon, kidney and uterus. In ovary expressed in granulosa cells of selective early antral follicles.

The protein resides in the secreted. In terms of biological role, cytokine that inhibits the activity of BMP2 and BMP4 in a dose-dependent manner, and thereby modulates signaling by BMP family members. Contributes to the regulation of embryonic morphogenesis via BMP family members. Antagonizes BMP4-induced suppression of progesterone production in granulosa cells. The protein is Gremlin-2 (Grem2) of Mus musculus (Mouse).